The primary structure comprises 195 residues: NADH-ubiquinone oxidoreductase subunit 9 (195 aa).

Belongs to the complex I 30 kDa subunit family. As to quaternary structure, complex I is composed of about 30 different subunits.

Its subcellular location is the mitochondrion inner membrane. It carries out the reaction a ubiquinone + NADH + 5 H(+)(in) = a ubiquinol + NAD(+) + 4 H(+)(out). In terms of biological role, core subunit of the mitochondrial membrane respiratory chain NADH dehydrogenase (Complex I) that is believed to belong to the minimal assembly required for catalysis. Complex I functions in the transfer of electrons from NADH to the respiratory chain. The immediate electron acceptor for the enzyme is believed to be ubiquinone. The protein is NADH-ubiquinone oxidoreductase subunit 9 (NAD9) of Acanthamoeba castellanii (Amoeba).